Here is a 431-residue protein sequence, read N- to C-terminus: Adenylosuccinate lyase (431 aa).

N(6)-(1,2-dicarboxyethyl)-AMP-binding positions include 4 to 5 (RY), 67 to 69 (RHD), and 93 to 94 (TS). Catalysis depends on H141, which acts as the Proton donor/acceptor. Q212 contributes to the N(6)-(1,2-dicarboxyethyl)-AMP binding site. S262 serves as the catalytic Proton donor/acceptor. N(6)-(1,2-dicarboxyethyl)-AMP-binding positions include S263, 268 to 270 (KRN), N276, and 307 to 311 (SAERI).

This sequence belongs to the lyase 1 family. Adenylosuccinate lyase subfamily. In terms of assembly, homodimer and homotetramer. Residues from neighboring subunits contribute catalytic and substrate-binding residues to each active site.

It catalyses the reaction N(6)-(1,2-dicarboxyethyl)-AMP = fumarate + AMP. It carries out the reaction (2S)-2-[5-amino-1-(5-phospho-beta-D-ribosyl)imidazole-4-carboxamido]succinate = 5-amino-1-(5-phospho-beta-D-ribosyl)imidazole-4-carboxamide + fumarate. It participates in purine metabolism; AMP biosynthesis via de novo pathway; AMP from IMP: step 2/2. The protein operates within purine metabolism; IMP biosynthesis via de novo pathway; 5-amino-1-(5-phospho-D-ribosyl)imidazole-4-carboxamide from 5-amino-1-(5-phospho-D-ribosyl)imidazole-4-carboxylate: step 2/2. Functionally, catalyzes two reactions in de novo purine nucleotide biosynthesis. Catalyzes the breakdown of 5-aminoimidazole- (N-succinylocarboxamide) ribotide (SAICAR or 2-[5-amino-1-(5-phospho-beta-D-ribosyl)imidazole-4-carboxamido]succinate) to 5-aminoimidazole-4-carboxamide ribotide (AICAR or 5-amino-1-(5-phospho-beta-D-ribosyl)imidazole-4-carboxamide) and fumarate, and of adenylosuccinate (ADS or N(6)-(1,2-dicarboxyethyl)-AMP) to adenosine monophosphate (AMP) and fumarate. The protein is Adenylosuccinate lyase (purB) of Staphylococcus saprophyticus subsp. saprophyticus (strain ATCC 15305 / DSM 20229 / NCIMB 8711 / NCTC 7292 / S-41).